Consider the following 486-residue polypeptide: PTS system N-acetylmuramic acid-specific EIIBC component (486 aa).

The 89-residue stretch at 1 to 89 folds into the PTS EIIB type-1 domain; the sequence is MAKITQTMIS…NKLIESVING (89 aa). Residue Cys-28 is the Phosphocysteine intermediate; for EIIB activity of the active site. The PTS EIIC type-1 domain occupies 127–486; it reads SKFATIFTPL…FFGSKDVDLS (360 aa). 10 helical membrane-spanning segments follow: residues 129-149, 170-190, 196-216, 230-250, 268-288, 312-332, 347-367, 381-401, 411-431, and 453-473; these read FATI…LLGF, LIAY…ILIG, AFGG…LGYN, FFGY…AAII, MILT…VVIM, AAIL…QGFV, LFPI…ALYF, GAII…VTLP, IGGA…LPVG, and IFAG…VGFL.

The protein resides in the cell inner membrane. The catalysed reaction is N-acetyl-beta-D-muramate(out) + N(pros)-phospho-L-histidyl-[protein] = N-acetyl-beta-D-muramate 6-phosphate(in) + L-histidyl-[protein]. The phosphoenolpyruvate-dependent sugar phosphotransferase system (sugar PTS), a major carbohydrate active transport system, catalyzes the phosphorylation of incoming sugar substrates concomitantly with their translocation across the cell membrane. This system is involved in N-acetylmuramic acid (MurNAc) transport, yielding cytoplasmic MurNAc-6-P. Is also able to take up anhydro-N-acetylmuramic acid (anhMurNAc), but cannot phosphorylate the carbon 6, probably because of the 1,6-anhydro ring. This is PTS system N-acetylmuramic acid-specific EIIBC component (murP) from Vibrio vulnificus (strain YJ016).